Consider the following 137-residue polypeptide: MPTINQLVRKPRKPRTFKSKVPALNFGYNSMSRKQTNNTAPQKRGVATRVGTMTPKKPNSALRKYARVRLSNQYEVTAYIPGIGHNLQEHSVVLIRGGRVKDLPGVRYHIIRGALDTAGVEGRMNGRSKYGAKRPKK.

The segment covering M31–P41 has biased composition (polar residues). A disordered region spans residues M31–K57. D102 carries the 3-methylthioaspartic acid modification.

Belongs to the universal ribosomal protein uS12 family. Part of the 30S ribosomal subunit. Contacts proteins S8 and S17. May interact with IF1 in the 30S initiation complex.

With S4 and S5 plays an important role in translational accuracy. Functionally, interacts with and stabilizes bases of the 16S rRNA that are involved in tRNA selection in the A site and with the mRNA backbone. Located at the interface of the 30S and 50S subunits, it traverses the body of the 30S subunit contacting proteins on the other side and probably holding the rRNA structure together. The combined cluster of proteins S8, S12 and S17 appears to hold together the shoulder and platform of the 30S subunit. The polypeptide is Small ribosomal subunit protein uS12 (Oenococcus oeni (strain ATCC BAA-331 / PSU-1)).